An 837-amino-acid polypeptide reads, in one-letter code: Protein TRANSPARENT TESTA 9 (837 aa).

The FPL domain maps to 42-192; that stretch reads LRSIAEILTY…AVRALTLNVY (151 aa). A disordered region spans residues 366 to 386; that stretch reads TEEANQQCSSTAAGMSDDGNS. The segment covering 368–378 has biased composition (polar residues); that stretch reads EANQQCSSTAA.

Belongs to the CLEC16A/gop-1 family.

It localises to the golgi apparatus membrane. Its function is as follows. Involved in membrane trafficking and vacuole development through membrane fusion at the vacuole. Required for membrane trafficking machinery and accumulation of flavonoids in the seed coat. This chain is Protein TRANSPARENT TESTA 9, found in Arabidopsis thaliana (Mouse-ear cress).